The sequence spans 74 residues: Mucroporin (74 aa).

An N-terminal signal peptide occupies residues 1–22 (MKVKFLLAVFLIVLVVTDHCHA). K39 carries the post-translational modification Lysine amide. A propeptide spanning residues 45 to 74 (QMEARFEPQNRNYRKRELDLEKLFANMPDY) is cleaved from the precursor.

This sequence belongs to the non-disulfide-bridged peptide (NDBP) superfamily. Short antimicrobial peptide (group 4) family. Expressed by the venom gland.

Its subcellular location is the secreted. It localises to the target cell membrane. Mucroporin: cationic host defense peptide that have antibacterial activity by breaking membranes. Is more effective on Gram-positive than on Gram-negative bacteria. Minimum inhibitory concentrations (MIC) are the following: MIC=&gt;100 ug/ml against E.coli AB94012, MIC=&gt;100 ug/ml against P.aeruginosa AB93066, MIC=25 ug/ml against B.thuringiensis AB92037, MIC=50 ug/ml against B.subtilis AB91021, MIC=25 ug/ml against S.aureus AB94004, and MIC=25 ug/ml against the methicillin-resistant coagulase-negative Staphylococcus. Its synthetic analog mucroporin-M1 is more effective. Does not show antiviral activity against any of measles, SARS-CoV, influenza H5N1, hepatitis B and HIV-1 viruses. Its function is as follows. Mutant mucroporin-M1: can inhibit Gram-positive bacteria at low concentrations and antibiotic-resistant pathogens. Minimum inhibitory concentrations (MIC) are the following: MIC=12.5 ug/ml against E.coli AB94012, MIC=100 ug/ml against P.aeruginosa AB93066, MIC=25 ug/ml against B.thuringiensis AB92037, MIC=25 ug/ml against B.subtilis AB91021, MIC=5 ug/ml against S.aureus AB94004, and MIC=5 ug/ml against the methicillin-resistant coagulase-negative Staphylococcus. Also shows antiviral activities against measles (EC(50) of 7.15 ug/ml), SARS-CoV (EC(50) of 14.46 ug/ml), influenza H5N1 viruses (EC(50) of 2.10 mug/ml), HIV-1, and hepatitis B virus. In Lychas mucronatus (Chinese swimming scorpion), this protein is Mucroporin.